Reading from the N-terminus, the 280-residue chain is Truncated lectin 2 (280 aa).

Residues 1-26 form the signal peptide; sequence MSSSNFSCILSISLTFFILLLNKVNS. Residues glutamate 148 and aspartate 150 each coordinate Mn(2+). Residues aspartate 150, phenylalanine 152, asparagine 154, and aspartate 158 each coordinate Ca(2+). Residue aspartate 158 participates in Mn(2+) binding. Asparagine 163 is a glycosylation site (N-linked (GlcNAc...) asparagine). Histidine 170 contacts Mn(2+). Residue asparagine 272 is glycosylated (N-linked (GlcNAc...) asparagine).

It belongs to the leguminous lectin family.

This chain is Truncated lectin 2 (LEC2), found in Medicago truncatula (Barrel medic).